A 450-amino-acid polypeptide reads, in one-letter code: Bifunctional protein GlmU (450 aa).

The interval 1 to 221 is pyrophosphorylase; the sequence is MRCIVLAAGM…SCEFIGINNR (221 aa). UDP-N-acetyl-alpha-D-glucosamine contacts are provided by residues 6 to 9, lysine 20, glutamine 69, 74 to 75, 96 to 98, glycine 135, glutamate 150, asparagine 165, and asparagine 219; these read LAAG, GT, and YGD. Aspartate 98 is a binding site for Mg(2+). Position 219 (asparagine 219) interacts with Mg(2+). Residues 222–242 are linker; sequence IQLAQAEKFRRQWILEELMIK. Residues 243 to 450 form an N-acetyltransferase region; sequence GVTIVDPETT…VIDKRKKEED (208 aa). Residues arginine 324 and lysine 342 each coordinate UDP-N-acetyl-alpha-D-glucosamine. Catalysis depends on histidine 354, which acts as the Proton acceptor. The UDP-N-acetyl-alpha-D-glucosamine site is built by tyrosine 357 and asparagine 368. Residues alanine 371, serine 396, alanine 414, and arginine 431 each coordinate acetyl-CoA.

In the N-terminal section; belongs to the N-acetylglucosamine-1-phosphate uridyltransferase family. This sequence in the C-terminal section; belongs to the transferase hexapeptide repeat family. Homotrimer. Requires Mg(2+) as cofactor.

The protein resides in the cytoplasm. It catalyses the reaction alpha-D-glucosamine 1-phosphate + acetyl-CoA = N-acetyl-alpha-D-glucosamine 1-phosphate + CoA + H(+). It carries out the reaction N-acetyl-alpha-D-glucosamine 1-phosphate + UTP + H(+) = UDP-N-acetyl-alpha-D-glucosamine + diphosphate. It functions in the pathway nucleotide-sugar biosynthesis; UDP-N-acetyl-alpha-D-glucosamine biosynthesis; N-acetyl-alpha-D-glucosamine 1-phosphate from alpha-D-glucosamine 6-phosphate (route II): step 2/2. The protein operates within nucleotide-sugar biosynthesis; UDP-N-acetyl-alpha-D-glucosamine biosynthesis; UDP-N-acetyl-alpha-D-glucosamine from N-acetyl-alpha-D-glucosamine 1-phosphate: step 1/1. Its pathway is bacterial outer membrane biogenesis; LPS lipid A biosynthesis. Catalyzes the last two sequential reactions in the de novo biosynthetic pathway for UDP-N-acetylglucosamine (UDP-GlcNAc). The C-terminal domain catalyzes the transfer of acetyl group from acetyl coenzyme A to glucosamine-1-phosphate (GlcN-1-P) to produce N-acetylglucosamine-1-phosphate (GlcNAc-1-P), which is converted into UDP-GlcNAc by the transfer of uridine 5-monophosphate (from uridine 5-triphosphate), a reaction catalyzed by the N-terminal domain. This Pseudothermotoga lettingae (strain ATCC BAA-301 / DSM 14385 / NBRC 107922 / TMO) (Thermotoga lettingae) protein is Bifunctional protein GlmU.